A 180-amino-acid chain; its full sequence is UPF0227 protein YcfP (180 aa).

Belongs to the UPF0227 family.

The protein is UPF0227 protein YcfP of Escherichia coli O139:H28 (strain E24377A / ETEC).